Consider the following 282-residue polypeptide: DegV domain-containing protein spr1415 (282 aa).

Positions 3–280 (LAVFTDSSAY…AGSIALGYIP (278 aa)) constitute a DegV domain. Residues threonine 61 and serine 94 each coordinate hexadecanoate.

Functionally, may bind long-chain fatty acids, such as palmitate, and may play a role in lipid transport or fatty acid metabolism. This chain is DegV domain-containing protein spr1415, found in Streptococcus pneumoniae (strain ATCC BAA-255 / R6).